The sequence spans 576 residues: Arginine--tRNA ligase (576 aa).

The 'HIGH' region motif lies at 122-132 (PNVAKQMHVGH).

It belongs to the class-I aminoacyl-tRNA synthetase family. In terms of assembly, monomer.

It localises to the cytoplasm. It catalyses the reaction tRNA(Arg) + L-arginine + ATP = L-arginyl-tRNA(Arg) + AMP + diphosphate. This chain is Arginine--tRNA ligase, found in Yersinia pestis bv. Antiqua (strain Antiqua).